The primary structure comprises 73 residues: UPF0499 protein NFIA_054990 (73 aa).

A signal peptide spans 1 to 20 (MKSFNLLSLSLLLAIASAAA). Cystine bridges form between cysteine 46/cysteine 60, cysteine 50/cysteine 63, and cysteine 56/cysteine 70.

This sequence belongs to the UPF0499 family.

The protein resides in the secreted. In Neosartorya fischeri (strain ATCC 1020 / DSM 3700 / CBS 544.65 / FGSC A1164 / JCM 1740 / NRRL 181 / WB 181) (Aspergillus fischerianus), this protein is UPF0499 protein NFIA_054990.